Reading from the N-terminus, the 2485-residue chain is Probable polyketide synthase 10 (2485 aa).

The 440-residue stretch at 8–447 (EDDIAIIGVG…GANCCIILSE (440 aa)) folds into the Ketosynthase family 3 (KS3) domain. Residues Cys-184, His-325, and His-363 each act as for beta-ketoacyl synthase activity in the active site. An acyl/malonyl transferase region spans residues 636–669 (GIEASFIVGHSLGEISAAHCSGMIDLETLCYIIY). Ser-646 serves as the catalytic For acyl/malonyl transferase activity. An N-terminal hotdog fold region spans residues 930-1054 (PPITILGNES…GNFHISNNLF (125 aa)). The region spanning 930–1220 (PPITILGNES…SKSLTPIQDP (291 aa)) is the PKS/mFAS DH domain. His-964 (proton acceptor; for dehydratase activity) is an active-site residue. Residues 1071 to 1220 (NYSLIERDDL…SKSLTPIQDP (150 aa)) are C-terminal hotdog fold. Asp-1134 serves as the catalytic Proton donor; for dehydratase activity. Residues 2410-2485 (ESNKGIDGLL…NQLIKFLNKK (76 aa)) enclose the Carrier domain. Residue Ser-2447 is modified to O-(pantetheine 4'-phosphoryl)serine.

It depends on pantetheine 4'-phosphate as a cofactor.

Functionally, probable polyketide synthase. This is Probable polyketide synthase 10 (pks10) from Dictyostelium discoideum (Social amoeba).